Here is an 855-residue protein sequence, read N- to C-terminus: DNA mismatch repair protein MutS (855 aa).

Residue 616–623 (GPNMGGKS) participates in ATP binding.

This sequence belongs to the DNA mismatch repair MutS family.

This protein is involved in the repair of mismatches in DNA. It is possible that it carries out the mismatch recognition step. This protein has a weak ATPase activity. The chain is DNA mismatch repair protein MutS from Escherichia coli O139:H28 (strain E24377A / ETEC).